Reading from the N-terminus, the 396-residue chain is Imidazolonepropionase (396 aa).

Fe(3+)-binding residues include His70 and His72. Residues His70 and His72 each coordinate Zn(2+). 4-imidazolone-5-propanoate is bound by residues Arg79, Tyr137, and His164. Position 137 (Tyr137) interacts with N-formimidoyl-L-glutamate. A Fe(3+)-binding site is contributed by His227. His227 provides a ligand contact to Zn(2+). Gln230 lines the 4-imidazolone-5-propanoate pocket. Asp301 contributes to the Fe(3+) binding site. Asp301 is a binding site for Zn(2+). Residues Asn303 and Gly305 each coordinate N-formimidoyl-L-glutamate. 4-imidazolone-5-propanoate is bound at residue Ser306.

The protein belongs to the metallo-dependent hydrolases superfamily. HutI family. It depends on Zn(2+) as a cofactor. Fe(3+) is required as a cofactor.

It is found in the cytoplasm. The catalysed reaction is 4-imidazolone-5-propanoate + H2O = N-formimidoyl-L-glutamate. It functions in the pathway amino-acid degradation; L-histidine degradation into L-glutamate; N-formimidoyl-L-glutamate from L-histidine: step 3/3. Catalyzes the hydrolytic cleavage of the carbon-nitrogen bond in imidazolone-5-propanoate to yield N-formimidoyl-L-glutamate. It is the third step in the universal histidine degradation pathway. This Mycolicibacterium smegmatis (strain ATCC 700084 / mc(2)155) (Mycobacterium smegmatis) protein is Imidazolonepropionase.